We begin with the raw amino-acid sequence, 251 residues long: UPF0309 protein SGR_3073 (251 aa).

Residues 36-221 (VADTVASGGR…EQLVARGIEP (186 aa)) enclose the SIS domain.

This sequence belongs to the UPF0309 family.

The chain is UPF0309 protein SGR_3073 from Streptomyces griseus subsp. griseus (strain JCM 4626 / CBS 651.72 / NBRC 13350 / KCC S-0626 / ISP 5235).